Consider the following 393-residue polypeptide: MTTYSNKGPKPERGRFLHFHSVTFWVGNAKQAASFYCNKMGFEPLAYKGLETGSREVVSHVIKQGKIVFVLCSALNPWNKEMGDHLVKHGDGVKDIAFEVEDCEHIVQKARERGAKIVREPWVEEDKFGKVKFAVLQTYGDTTHTLVEKINYTGRFLPGFEAPTYKDTLLPKLPSCNLEIIDHIVGNQPDQEMESASEWYLKNLQFHRFWSVDDTQVHTEYSSLRSIVVANYEESIKMPINEPAPGRKKSQIQEYVDYNGGAGVQHIALRTEDIITTIRHLRERGMEFLAVPSSYYRLLRENLKTSKIQVKENMDVLEELKILVDYDEKGYLLQIFTKPMQDRPTLFLEVIQRHNHQGFGAGNFNSLFKAFEEEQALRGNLTDLETNGVRSGM.

Residue Thr2 is modified to N-acetylthreonine. VOC domains follow at residues 18–149 (HFHS…LVEK) and 180–338 (IIDH…IFTK). Residue Lys132 is modified to N6-succinyllysine. A Fe cation-binding site is contributed by His183. A phosphoserine mark is found at Ser211, Ser226, and Ser250. Residues His266 and Glu349 each coordinate Fe cation.

It belongs to the 4HPPD family. Homodimer. Fe cation serves as cofactor.

The protein localises to the cytoplasm. Its subcellular location is the endoplasmic reticulum membrane. It is found in the golgi apparatus membrane. It carries out the reaction 3-(4-hydroxyphenyl)pyruvate + O2 = homogentisate + CO2. It participates in amino-acid degradation; L-phenylalanine degradation; acetoacetate and fumarate from L-phenylalanine: step 3/6. Its function is as follows. Catalyzes the conversion of 4-hydroxyphenylpyruvic acid to homogentisic acid, one of the steps in tyrosine catabolism. The protein is 4-hydroxyphenylpyruvate dioxygenase (Hpd) of Rattus norvegicus (Rat).